The sequence spans 481 residues: Glucokinase-1 (481 aa).

Residues 4 to 477 (PKLTKAVDSI…SGVGAALCAL (474 aa)) form the Hexokinase domain. The segment at 64-204 (SGQEHGVTML…LSNVHVVALT (141 aa)) is hexokinase small subdomain. ATP is bound at residue lysine 101. The interval 146-172 (KMGFTFSYPVDQTSLSSGKLIRWTKGF) is glucose-binding. The tract at residues 205 to 466 (NDTTGTLLAR…RDVHLRISKD (262 aa)) is hexokinase large subdomain. An ATP-binding site is contributed by 466-471 (DGSGVG).

The protein belongs to the hexokinase family.

It carries out the reaction D-glucose + ATP = D-glucose 6-phosphate + ADP + H(+). The catalysed reaction is a D-hexose + ATP = a D-hexose 6-phosphate + ADP + H(+). The enzyme catalyses D-mannose + ATP = D-mannose 6-phosphate + ADP + H(+). It participates in carbohydrate metabolism; hexose metabolism. Its pathway is carbohydrate degradation; glycolysis; D-glyceraldehyde 3-phosphate and glycerone phosphate from D-glucose: step 1/4. Functionally, glukokinase specific for aldohexoses. Phosphorylates glucose and mannose, but not fructose. The chain is Glucokinase-1 (GLK1) from Kluyveromyces lactis (strain ATCC 8585 / CBS 2359 / DSM 70799 / NBRC 1267 / NRRL Y-1140 / WM37) (Yeast).